We begin with the raw amino-acid sequence, 155 residues long: Endoribonuclease YbeY (155 aa).

Zn(2+) is bound by residues His-115, His-119, and His-125.

It belongs to the endoribonuclease YbeY family. It depends on Zn(2+) as a cofactor.

The protein resides in the cytoplasm. Single strand-specific metallo-endoribonuclease involved in late-stage 70S ribosome quality control and in maturation of the 3' terminus of the 16S rRNA. This chain is Endoribonuclease YbeY, found in Polynucleobacter asymbioticus (strain DSM 18221 / CIP 109841 / QLW-P1DMWA-1) (Polynucleobacter necessarius subsp. asymbioticus).